Consider the following 329-residue polypeptide: Aspartate carbamoyltransferase catalytic subunit (329 aa).

Carbamoyl phosphate-binding residues include arginine 63 and threonine 64. Lysine 91 contributes to the L-aspartate binding site. 3 residues coordinate carbamoyl phosphate: arginine 113, histidine 141, and glutamine 144. L-aspartate-binding residues include arginine 179 and arginine 234. Residues glycine 275 and proline 276 each contribute to the carbamoyl phosphate site.

Belongs to the aspartate/ornithine carbamoyltransferase superfamily. ATCase family. As to quaternary structure, heterododecamer (2C3:3R2) of six catalytic PyrB chains organized as two trimers (C3), and six regulatory PyrI chains organized as three dimers (R2).

The enzyme catalyses carbamoyl phosphate + L-aspartate = N-carbamoyl-L-aspartate + phosphate + H(+). Its pathway is pyrimidine metabolism; UMP biosynthesis via de novo pathway; (S)-dihydroorotate from bicarbonate: step 2/3. Catalyzes the condensation of carbamoyl phosphate and aspartate to form carbamoyl aspartate and inorganic phosphate, the committed step in the de novo pyrimidine nucleotide biosynthesis pathway. This is Aspartate carbamoyltransferase catalytic subunit from Magnetococcus marinus (strain ATCC BAA-1437 / JCM 17883 / MC-1).